Reading from the N-terminus, the 639-residue chain is Chaperone protein DnaK (639 aa).

T197 is modified (phosphothreonine; by autocatalysis). Residues 600 to 639 are disordered; the sequence is SGAQGGAQAGPDMNAGQSNAGQNNGKQDDNVQDADFEEVK. The span at 613–624 shows a compositional bias: low complexity; that stretch reads NAGQSNAGQNNG. The segment covering 629 to 639 has biased composition (acidic residues); that stretch reads NVQDADFEEVK.

It belongs to the heat shock protein 70 family.

Its function is as follows. Acts as a chaperone. The sequence is that of Chaperone protein DnaK from Bacteroides fragilis (strain ATCC 25285 / DSM 2151 / CCUG 4856 / JCM 11019 / LMG 10263 / NCTC 9343 / Onslow / VPI 2553 / EN-2).